The following is a 171-amino-acid chain: UPF0312 protein SE_0264 (171 aa).

It belongs to the UPF0312 family.

This is UPF0312 protein SE_0264 from Staphylococcus epidermidis (strain ATCC 12228 / FDA PCI 1200).